Here is a 466-residue protein sequence, read N- to C-terminus: Histidine--tRNA ligase (466 aa).

The protein belongs to the class-II aminoacyl-tRNA synthetase family. In terms of assembly, homodimer.

The protein localises to the cytoplasm. The enzyme catalyses tRNA(His) + L-histidine + ATP = L-histidyl-tRNA(His) + AMP + diphosphate + H(+). The sequence is that of Histidine--tRNA ligase (hisS) from Bifidobacterium longum (strain NCC 2705).